The primary structure comprises 190 residues: uncharacterized protein (190 aa).

It belongs to the Iojap/RsfS family.

This is an uncharacterized protein from Caenorhabditis elegans.